The primary structure comprises 556 residues: 3-phosphoinositide-dependent protein kinase 1 (556 aa).

Y9 is subject to Phosphotyrosine; by SRC and INSR. S25 carries the phosphoserine modification. Residues 26–80 (PSMVRTQTESSTPPGIPGGSRQGPAMDGTAAEPRPGAGSLQHAQPPPQPRKKRPE) are disordered. A compositionally biased stretch (polar residues) spans 28-38 (MVRTQTESSTP). One can recognise a Protein kinase domain in the interval 82–342 (FKFGKILGEG…YGPLKAHPFF (261 aa)). ATP contacts are provided by residues 92 to 94 (SFS) and K111. Positions 113 to 157 (LEKRHIIKENKVPYVTRERDVMSRLDHPFFVKLYFTFQDDEKLYF) are PIF-pocket. ATP is bound by residues 160 to 162 (SYA) and E166. The active-site Proton acceptor is D205. E209 and D223 together coordinate ATP. At S241 the chain carries Phosphoserine; by autocatalysis. N6-acetyllysine is present on K304. T354 is subject to Phosphothreonine; by MELK. Residues Y373 and Y376 each carry the phosphotyrosine; by SRC and INSR modification. S393 is subject to Phosphoserine. Position 394 is a phosphoserine; by MAP3K5 (S394). The residue at position 396 (S396) is a Phosphoserine. S398 carries the post-translational modification Phosphoserine; by MAP3K5. At S410 the chain carries Phosphoserine. One can recognise a PH domain in the interval 459 to 550 (KMGPVDKRKG…EVWRQRYQSH (92 aa)). A Phosphoserine; by PKC/PRKCQ modification is found at S501. Residue T513 is modified to Phosphothreonine; by autocatalysis. At S529 the chain carries Phosphoserine; by PKC/PRKCQ.

It belongs to the protein kinase superfamily. AGC Ser/Thr protein kinase family. PDPK1 subfamily. Homodimer in its autoinhibited state. Active as monomer. Interacts with NPRL2, PPARG, PAK1, PTK2B, GRB14, PKN1 (via C-terminus), STRAP and IKKB. The Tyr-9 phosphorylated form interacts with SRC, RASA1 and CRK (via their SH2 domains). Interacts with SGK3 in a phosphorylation-dependent manner. The tyrosine-phosphorylated form interacts with PTPN6. The Ser-241 phosphorylated form interacts with YWHAH and YWHAQ. Binds INSR in response to insulin. Interacts (via PH domain) with SMAD3, SMAD4 and SMAD7. Interacts with PKN2; the interaction stimulates PDPK1 autophosphorylation, its PI(3,4,5)P3-dependent kinase activity toward 'Ser-473' of AKT1 but also activates its kinase activity toward PRKCD and PRKCZ. Post-translationally, phosphorylation on Ser-241 in the activation loop is required for full activity. PDPK1 itself can autophosphorylate Ser-241, leading to its own activation. Autophosphorylation is inhibited by the apoptotic C-terminus cleavage product of PKN2. Tyr-9 phosphorylation is critical for stabilization of both PDPK1 and the PDPK1/SRC complex via HSP90-mediated protection of PDPK1 degradation. Angiotensin II stimulates the tyrosine phosphorylation of PDPK1 in vascular smooth muscle in a calcium- and SRC-dependent manner. Phosphorylated on Tyr-9, Tyr-373 and Tyr-376 by INSR in response to insulin. Palmitate negatively regulates autophosphorylation at Ser-241 and palmitate-induced phosphorylation at Ser-529 and Ser-501 by PKC/PRKCQ negatively regulates its ability to phosphorylate PKB/AKT1. Phosphorylation at Thr-354 by MELK partially inhibits kinase activity, the inhibition is cooperatively enhanced by phosphorylation at Ser-394 and Ser-398 by MAP3K5. Autophosphorylated; autophosphorylation is inhibited by the apoptotic C-terminus cleavage product of PKN2. In terms of processing, monoubiquitinated in the kinase domain, deubiquitinated by USP4. Appears to be expressed ubiquitously. The Tyr-9 phosphorylated form is markedly increased in diseased tissue compared with normal tissue from lung, liver, colon and breast.

The protein localises to the cytoplasm. It is found in the nucleus. It localises to the cell membrane. Its subcellular location is the cell junction. The protein resides in the focal adhesion. It carries out the reaction L-seryl-[protein] + ATP = O-phospho-L-seryl-[protein] + ADP + H(+). The catalysed reaction is L-threonyl-[protein] + ATP = O-phospho-L-threonyl-[protein] + ADP + H(+). Homodimerization regulates its activity by maintaining the kinase in an autoinhibitory conformation. NPRL2 down-regulates its activity by interfering with tyrosine phosphorylation at the Tyr-9, Tyr-373 and Tyr-376 residues. The 14-3-3 protein YWHAQ acts as a negative regulator by association with the residues surrounding the Ser-241 residue. STRAP positively regulates its activity by enhancing its autophosphorylation and by stimulating its dissociation from YWHAQ. SMAD2, SMAD3, SMAD4 and SMAD7 also positively regulate its activity by stimulating its dissociation from YWHAQ. Activated by phosphorylation on Tyr-9, Tyr-373 and Tyr-376 by INSR in response to insulin. Serine/threonine kinase which acts as a master kinase, phosphorylating and activating a subgroup of the AGC family of protein kinases. Its targets include: protein kinase B (PKB/AKT1, PKB/AKT2, PKB/AKT3), p70 ribosomal protein S6 kinase (RPS6KB1), p90 ribosomal protein S6 kinase (RPS6KA1, RPS6KA2 and RPS6KA3), cyclic AMP-dependent protein kinase (PRKACA), protein kinase C (PRKCD and PRKCZ), serum and glucocorticoid-inducible kinase (SGK1, SGK2 and SGK3), p21-activated kinase-1 (PAK1), TSSK3, protein kinase PKN (PKN1 and PKN2). Plays a central role in the transduction of signals from insulin by providing the activating phosphorylation to PKB/AKT1, thus propagating the signal to downstream targets controlling cell proliferation and survival, as well as glucose and amino acid uptake and storage. Negatively regulates the TGF-beta-induced signaling by: modulating the association of SMAD3 and SMAD7 with TGF-beta receptor, phosphorylating SMAD2, SMAD3, SMAD4 and SMAD7, preventing the nuclear translocation of SMAD3 and SMAD4 and the translocation of SMAD7 from the nucleus to the cytoplasm in response to TGF-beta. Activates PPARG transcriptional activity and promotes adipocyte differentiation. Activates the NF-kappa-B pathway via phosphorylation of IKKB. The tyrosine phosphorylated form is crucial for the regulation of focal adhesions by angiotensin II. Controls proliferation, survival, and growth of developing pancreatic cells. Participates in the regulation of Ca(2+) entry and Ca(2+)-activated K(+) channels of mast cells. Essential for the motility of vascular endothelial cells (ECs) and is involved in the regulation of their chemotaxis. Plays a critical role in cardiac homeostasis by serving as a dual effector for cell survival and beta-adrenergic response. Plays an important role during thymocyte development by regulating the expression of key nutrient receptors on the surface of pre-T cells and mediating Notch-induced cell growth and proliferative responses. Provides negative feedback inhibition to toll-like receptor-mediated NF-kappa-B activation in macrophages. Its function is as follows. Catalytically inactive. This is 3-phosphoinositide-dependent protein kinase 1 (PDPK1) from Homo sapiens (Human).